Here is a 361-residue protein sequence, read N- to C-terminus: Phospho-N-acetylmuramoyl-pentapeptide-transferase (361 aa).

A run of 10 helical transmembrane segments spans residues 28–48 (LAII…IKFL), 74–94 (TMGG…LADL), 99–119 (IWIT…DDYA), 133–153 (SKLL…EYTD), 168–188 (LSLD…VGSS), 203–223 (VPIA…GNLI), 236–256 (TGEL…FLWF), 263–283 (VFMG…ISVI), 288–308 (VVLS…ILQV), and 338–358 (KVVI…LSSL).

Belongs to the glycosyltransferase 4 family. MraY subfamily. Mg(2+) is required as a cofactor.

It is found in the cell inner membrane. It carries out the reaction UDP-N-acetyl-alpha-D-muramoyl-L-alanyl-gamma-D-glutamyl-meso-2,6-diaminopimeloyl-D-alanyl-D-alanine + di-trans,octa-cis-undecaprenyl phosphate = di-trans,octa-cis-undecaprenyl diphospho-N-acetyl-alpha-D-muramoyl-L-alanyl-D-glutamyl-meso-2,6-diaminopimeloyl-D-alanyl-D-alanine + UMP. The protein operates within cell wall biogenesis; peptidoglycan biosynthesis. Catalyzes the initial step of the lipid cycle reactions in the biosynthesis of the cell wall peptidoglycan: transfers peptidoglycan precursor phospho-MurNAc-pentapeptide from UDP-MurNAc-pentapeptide onto the lipid carrier undecaprenyl phosphate, yielding undecaprenyl-pyrophosphoryl-MurNAc-pentapeptide, known as lipid I. The sequence is that of Phospho-N-acetylmuramoyl-pentapeptide-transferase from Rickettsia canadensis (strain McKiel).